A 68-amino-acid chain; its full sequence is ATP synthase subunit c (68 aa).

Transmembrane regions (helical) follow at residues Ala5–Val25 and Phe47–Val67.

This sequence belongs to the ATPase C chain family. As to quaternary structure, F-type ATPases have 2 components, F(1) - the catalytic core - and F(0) - the membrane proton channel. F(1) has five subunits: alpha(3), beta(3), gamma(1), delta(1), epsilon(1). F(0) has three main subunits: a(1), b(2) and c(10-14). The alpha and beta chains form an alternating ring which encloses part of the gamma chain. F(1) is attached to F(0) by a central stalk formed by the gamma and epsilon chains, while a peripheral stalk is formed by the delta and b chains.

Its subcellular location is the cell membrane. F(1)F(0) ATP synthase produces ATP from ADP in the presence of a proton or sodium gradient. F-type ATPases consist of two structural domains, F(1) containing the extramembraneous catalytic core and F(0) containing the membrane proton channel, linked together by a central stalk and a peripheral stalk. During catalysis, ATP synthesis in the catalytic domain of F(1) is coupled via a rotary mechanism of the central stalk subunits to proton translocation. Functionally, key component of the F(0) channel; it plays a direct role in translocation across the membrane. A homomeric c-ring of between 10-14 subunits forms the central stalk rotor element with the F(1) delta and epsilon subunits. The sequence is that of ATP synthase subunit c from Oceanobacillus iheyensis (strain DSM 14371 / CIP 107618 / JCM 11309 / KCTC 3954 / HTE831).